The chain runs to 293 residues: Ethanolamine ammonia-lyase small subunit (293 aa).

The adenosylcob(III)alamin site is built by Val207 and Glu228.

This sequence belongs to the EutC family. As to quaternary structure, the basic unit is a heterodimer which dimerizes to form tetramers. The heterotetramers trimerize; 6 large subunits form a core ring with 6 small subunits projecting outwards. Adenosylcob(III)alamin serves as cofactor.

It is found in the bacterial microcompartment. It catalyses the reaction ethanolamine = acetaldehyde + NH4(+). It participates in amine and polyamine degradation; ethanolamine degradation. Functionally, catalyzes the deamination of various vicinal amino-alcohols to oxo compounds. Allows this organism to utilize ethanolamine as the sole source of nitrogen and carbon in the presence of external vitamin B12. This Listeria monocytogenes serotype 4a (strain HCC23) protein is Ethanolamine ammonia-lyase small subunit.